A 340-amino-acid polypeptide reads, in one-letter code: MLEKNPVISVKNLNKEIGNHRILNDISFSVCSGEILGIIGHSGSGKSTLLRCLDFLISPTSGSISIAGFHNSSAKEKISRSDFAKRVAYISQNGGLFLAKTVFENIAYPLKIRYPEMTKSLIEEKVNEALHFLNLYERKHAYPSRLSGGQKQKAAIAIAIVSDPQVLLCDEITSALDPRSTEDITDKLLQLNEERGITQVFVSHEIEVIKKLCTHTLVMHQGNIEELGPADKLFLNPYSSITEELFHMNSIAKGIYDHNENEEILRLGFPKGLAVQGMISQLIQGGQISINILSGDINLFRKIPLGFLIIVLSGEKKLRDRAKDILIGKGVIVQKFQKSR.

Positions 8–246 (ISVKNLNKEI…PYSSITEELF (239 aa)) constitute an ABC transporter domain. An ATP-binding site is contributed by 40 to 47 (GHSGSGKS).

Belongs to the ABC transporter superfamily. Methionine importer (TC 3.A.1.24) family. The complex is composed of two ATP-binding proteins (MetN), two transmembrane proteins (MetI) and a solute-binding protein (MetQ).

It localises to the cell inner membrane. The enzyme catalyses L-methionine(out) + ATP + H2O = L-methionine(in) + ADP + phosphate + H(+). It carries out the reaction D-methionine(out) + ATP + H2O = D-methionine(in) + ADP + phosphate + H(+). Part of the ABC transporter complex MetNIQ involved in methionine import. Responsible for energy coupling to the transport system. This Chlamydia felis (strain Fe/C-56) (Chlamydophila felis) protein is Methionine import ATP-binding protein MetN.